Here is an 825-residue protein sequence, read N- to C-terminus: Translation initiation factor IF-2 (825 aa).

Composition is skewed to basic and acidic residues over residues 1 to 19 (MTKK…DNKK), 35 to 45 (RKGEKKTEGKR), 70 to 98 (LLKD…EYKK), and 113 to 122 (KKVESVEKPA). Residues 1–239 (MTKKQENETS…TQRKDRPLPE (239 aa)) form a disordered region. Over residues 158 to 169 (PSSSRRPSSRPS) the composition is skewed to low complexity. Positions 181 to 191 (GRRRKSGKPGR) are enriched in basic residues. Polar residues predominate over residues 194 to 208 (QNSYADQGRGANSNR). Basic residues predominate over residues 211 to 220 (QRKRKNKKHQ). One can recognise a tr-type G domain in the interval 326 to 495 (VRPPVVTIMG…ILEADMLELK (170 aa)). The G1 stretch occupies residues 335–342 (GHVDHGKT). 335–342 (GHVDHGKT) contributes to the GTP binding site. The G2 stretch occupies residues 360–364 (GITQN). The interval 381–384 (DTPG) is G3. GTP is bound by residues 381 to 385 (DTPGH) and 435 to 438 (NKMD). The tract at residues 435 to 438 (NKMD) is G4. The segment at 471-473 (SAK) is G5.

The protein belongs to the TRAFAC class translation factor GTPase superfamily. Classic translation factor GTPase family. IF-2 subfamily.

It localises to the cytoplasm. One of the essential components for the initiation of protein synthesis. Protects formylmethionyl-tRNA from spontaneous hydrolysis and promotes its binding to the 30S ribosomal subunits. Also involved in the hydrolysis of GTP during the formation of the 70S ribosomal complex. The sequence is that of Translation initiation factor IF-2 from Lactobacillus delbrueckii subsp. bulgaricus (strain ATCC BAA-365 / Lb-18).